A 354-amino-acid chain; its full sequence is UDP-3-O-acylglucosamine N-acyltransferase (354 aa).

The active-site Proton acceptor is histidine 257.

Belongs to the transferase hexapeptide repeat family. LpxD subfamily. As to quaternary structure, homotrimer.

The catalysed reaction is a UDP-3-O-[(3R)-3-hydroxyacyl]-alpha-D-glucosamine + a (3R)-hydroxyacyl-[ACP] = a UDP-2-N,3-O-bis[(3R)-3-hydroxyacyl]-alpha-D-glucosamine + holo-[ACP] + H(+). It participates in bacterial outer membrane biogenesis; LPS lipid A biosynthesis. Catalyzes the N-acylation of UDP-3-O-acylglucosamine using 3-hydroxyacyl-ACP as the acyl donor. Is involved in the biosynthesis of lipid A, a phosphorylated glycolipid that anchors the lipopolysaccharide to the outer membrane of the cell. The protein is UDP-3-O-acylglucosamine N-acyltransferase of Rhizobium johnstonii (strain DSM 114642 / LMG 32736 / 3841) (Rhizobium leguminosarum bv. viciae).